The chain runs to 97 residues: Protein YcgL (97 aa).

The region spanning 1–85 is the YcgL domain; sequence MLCVIYRSSK…PPEDLLKQHL (85 aa).

The polypeptide is Protein YcgL (Escherichia fergusonii (strain ATCC 35469 / DSM 13698 / CCUG 18766 / IAM 14443 / JCM 21226 / LMG 7866 / NBRC 102419 / NCTC 12128 / CDC 0568-73)).